The sequence spans 147 residues: Austinoid biosynthesis clusters protein H (147 aa).

It belongs to the trt14 isomerase family. As to quaternary structure, homodimer.

It functions in the pathway secondary metabolite biosynthesis; terpenoid biosynthesis. Its function is as follows. Part of the gene cluster B that mediates the biosynthesis of the fungal meroterpenoid acetoxydehydroaustin. The first step of the pathway is the synthesis of 3,5-dimethylorsellinic acid by the polyketide synthase ausA. 3,5-dimethylorsellinic acid is then prenylated by the polyprenyl transferase ausN. Further epoxidation by the FAD-dependent monooxygenase ausM and cyclization by the probable terpene cyclase ausL lead to the formation of protoaustinoid A. Protoaustinoid A is then oxidized to spiro-lactone preaustinoid A3 by the combined action of the FAD-binding monooxygenases ausB and ausC, and the dioxygenase ausE. Acid-catalyzed keto-rearrangement and ring contraction of the tetraketide portion of preaustinoid A3 by ausJ lead to the formation of preaustinoid A4. The aldo-keto reductase ausK, with the help of ausH, is involved in the next step by transforming preaustinoid A4 into isoaustinone which is in turn hydroxylated by the P450 monooxygenase ausI to form austinolide. The cytochrome P450 monooxygenase ausG then modifies austinolide to austinol. Austinol is further acetylated to austin by the O-acetyltransferase ausP, which spontaneously changes to dehydroaustin. The cytochrome P450 monooxygenase then converts dehydroaustin is into 7-dehydrodehydroaustin. The hydroxylation catalyzed by ausR permits the second O-acetyltransferase ausQ to add an additional acetyl group to the molecule, leading to the formation of acetoxydehydroaustin. Due to genetic rearrangements of the clusters and the subsequent loss of some enzymes, the end product of the Penicillium brasilianum austinoid biosynthesis clusters is acetoxydehydroaustin. The sequence is that of Austinoid biosynthesis clusters protein H from Penicillium brasilianum.